We begin with the raw amino-acid sequence, 193 residues long: Thymidine kinase (193 aa).

ATP-binding positions include 9–16 and 87–90; these read SAMNAGKS and DEAQ. Glu-88 serves as the catalytic Proton acceptor. The Zn(2+) site is built by Cys-145, Cys-147, Cys-182, and His-185.

Belongs to the thymidine kinase family. Homotetramer.

Its subcellular location is the cytoplasm. It carries out the reaction thymidine + ATP = dTMP + ADP + H(+). The protein is Thymidine kinase of Idiomarina loihiensis (strain ATCC BAA-735 / DSM 15497 / L2-TR).